We begin with the raw amino-acid sequence, 350 residues long: DNA polymerase delta subunit 3 (350 aa).

The segment at 131–350 (EEKSKPLVRP…LESFFKRKAK (220 aa)) is disordered. 2 stretches are compositionally biased toward basic and acidic residues: residues 146–162 (TTPEETTGRKSKSKDMG) and 172–195 (MKKDRDDKETSRQNELRKRKEENL). T223 bears the Phosphothreonine mark. S230 carries the phosphoserine modification. Basic and acidic residues predominate over residues 234–248 (SPKETDSNDKDKNND). A compositionally biased stretch (acidic residues) spans 249-262 (DLEDLLETTAEDSL). Over residues 274-286 (SETEHSKEPKSEE) the composition is skewed to basic and acidic residues. The span at 320-332 (LSSSKKQETPSSN) shows a compositional bias: polar residues.

In terms of assembly, DNA polymerase delta is a heterotrimer of POL3, POL32 and HYS2. POL32 can form homodimers.

Its subcellular location is the nucleus. DNA polymerase delta (DNA polymerase III) participates in chromosomal DNA replication. It is required during synthesis of the leading and lagging DNA strands at the replication fork and binds at/or near replication origins and moves along DNA with the replication fork. It has 3'-5' proofreading exonuclease activity that correct errors arising during DNA replication. It is also involved in DNA synthesis during DNA repair. The chain is DNA polymerase delta subunit 3 (POL32) from Saccharomyces cerevisiae (strain ATCC 204508 / S288c) (Baker's yeast).